A 261-amino-acid chain; its full sequence is HLA class II histocompatibility antigen, DQ beta 1 chain (261 aa).

An N-terminal signal peptide occupies residues Met1–Gly32. Positions Arg33–Arg126 are beta-1. Residues Arg33–Lys230 lie on the Extracellular side of the membrane. 2 cysteine pairs are disulfide-bonded: Cys47-Cys111 and Cys149-Cys205. Asn51 is a glycosylation site (N-linked (GlcNAc...) asparagine). The interval Val127–Trp220 is beta-2. Residues Pro129–Thr217 form the Ig-like C1-type domain. Residues Arg221–Lys230 are connecting peptide. Residues Met231–Ile251 form a helical membrane-spanning segment. Topologically, residues His252–His261 are cytoplasmic.

The protein belongs to the MHC class II family. Heterodimer of an alpha and a beta subunit; also referred as MHC class II molecule. In the endoplasmic reticulum (ER) it forms a heterononamer; 3 MHC class II molecules bind to a CD74 homotrimer (also known as invariant chain or HLA class II histocompatibility antigen gamma chain). In the endosomal/lysosomal system; CD74 undergoes sequential degradation by various proteases; leaving a small fragment termed CLIP on each MHC class II molecule. MHC class II molecule interacts with HLA_DM, and HLA_DO in B-cells, in order to release CLIP and facilitate the binding of antigenic peptides.

It localises to the cell membrane. The protein resides in the endoplasmic reticulum membrane. Its subcellular location is the golgi apparatus. The protein localises to the trans-Golgi network membrane. It is found in the endosome membrane. It localises to the lysosome membrane. Functionally, binds peptides derived from antigens that access the endocytic route of antigen presenting cells (APC) and presents them on the cell surface for recognition by the CD4 T-cells. The peptide binding cleft accommodates peptides of 10-30 residues. The peptides presented by MHC class II molecules are generated mostly by degradation of proteins that access the endocytic route, where they are processed by lysosomal proteases and other hydrolases. Exogenous antigens that have been endocytosed by the APC are thus readily available for presentation via MHC II molecules, and for this reason this antigen presentation pathway is usually referred to as exogenous. As membrane proteins on their way to degradation in lysosomes as part of their normal turn-over are also contained in the endosomal/lysosomal compartments, exogenous antigens must compete with those derived from endogenous components. Autophagy is also a source of endogenous peptides, autophagosomes constitutively fuse with MHC class II loading compartments. In addition to APCs, other cells of the gastrointestinal tract, such as epithelial cells, express MHC class II molecules and CD74 and act as APCs, which is an unusual trait of the GI tract. To produce a MHC class II molecule that presents an antigen, three MHC class II molecules (heterodimers of an alpha and a beta chain) associate with a CD74 trimer in the ER to form a heterononamer. Soon after the entry of this complex into the endosomal/lysosomal system where antigen processing occurs, CD74 undergoes a sequential degradation by various proteases, including CTSS and CTSL, leaving a small fragment termed CLIP (class-II-associated invariant chain peptide). The removal of CLIP is facilitated by HLA-DM via direct binding to the alpha-beta-CLIP complex so that CLIP is released. HLA-DM stabilizes MHC class II molecules until primary high affinity antigenic peptides are bound. The MHC II molecule bound to a peptide is then transported to the cell membrane surface. In B-cells, the interaction between HLA-DM and MHC class II molecules is regulated by HLA-DO. Primary dendritic cells (DCs) also to express HLA-DO. Lysosomal microenvironment has been implicated in the regulation of antigen loading into MHC II molecules, increased acidification produces increased proteolysis and efficient peptide loading. This is HLA class II histocompatibility antigen, DQ beta 1 chain (HLA-DQB1) from Homo sapiens (Human).